Reading from the N-terminus, the 732-residue chain is Catalase-peroxidase (732 aa).

Residues 1–24 (MDAKTDDNSAGKCPVAHGSAGRTN) form a disordered region. Positions 96-219 (WHSAGTYRIA…LGAVQMGLIY (124 aa)) form a cross-link, tryptophyl-tyrosyl-methioninium (Trp-Tyr) (with M-245). Histidine 97 acts as the Proton acceptor in catalysis. Residues 219-245 (YVNPEGPNGNPDPLAAARDIRDTFARM) constitute a cross-link (tryptophyl-tyrosyl-methioninium (Tyr-Met) (with W-96)). Residue histidine 260 participates in heme b binding.

The protein belongs to the peroxidase family. Peroxidase/catalase subfamily. In terms of assembly, homodimer or homotetramer. Heme b serves as cofactor. Formation of the three residue Trp-Tyr-Met cross-link is important for the catalase, but not the peroxidase activity of the enzyme.

It carries out the reaction H2O2 + AH2 = A + 2 H2O. The catalysed reaction is 2 H2O2 = O2 + 2 H2O. Its function is as follows. Bifunctional enzyme with both catalase and broad-spectrum peroxidase activity. The chain is Catalase-peroxidase from Mesorhizobium japonicum (strain LMG 29417 / CECT 9101 / MAFF 303099) (Mesorhizobium loti (strain MAFF 303099)).